The chain runs to 372 residues: Protein phosphatase 1 regulatory subunit 42 (372 aa).

LRR repeat units follow at residues 30 to 51 (RITH…TMCR), 52 to 71 (NLTV…NLGS), 72 to 93 (NLTH…SGLK), 94 to 115 (RLEK…EGLR), 116 to 137 (ELRE…LFDP), 146 to 167 (SLSV…AVLE), and 168 to 189 (NLTQ…EFVL). The LRRCT domain maps to 203 to 241 (NPVCLKPKYREKVTIISKTLEILDGKEIKEMARQFLLNW).

It is found in the cytoplasm. Its subcellular location is the cytoskeleton. It localises to the microtubule organizing center. The protein resides in the centrosome. In terms of biological role, may regulate phosphatase activity of protein phosphatase 1 (PP1) complexes. This is Protein phosphatase 1 regulatory subunit 42 (ppp1r42) from Xenopus laevis (African clawed frog).